Here is a 597-residue protein sequence, read N- to C-terminus: Uptake hydrogenase large subunit (597 aa).

Ni(2+) contacts are provided by Cys-75, Cys-78, Cys-576, and Cys-579.

Belongs to the [NiFe]/[NiFeSe] hydrogenase large subunit family. Heterodimer of a large and a small subunit. Ni(2+) serves as cofactor.

The protein localises to the cell membrane. The enzyme catalyses H2 + A = AH2. Its function is as follows. This enzyme recycles the H(2) produced by nitrogenase to increase the production of ATP and to protect nitrogenase against inhibition or damage by O(2) under carbon- or phosphate-limited conditions. The sequence is that of Uptake hydrogenase large subunit (hupB) from Rhodobacter capsulatus (Rhodopseudomonas capsulata).